The following is a 348-amino-acid chain: MSDRLTLLRPDDWHIHLRDGAVLPHTVGDVARTFARAIIMPNLVPPVRNADEAGAYRERILNARPAGSRFEPLMVLYLTDRTSPEDIRAAKASGIVYAAKLYPAGATTNSDSGVTSIDNIFPAIEALAEVGMPLLVHGEVTRSEIDVFDREKRFIDEHMRRLVERFPTLKVVFEHITTADAAQFVTEAPANVGATITAQHLLYNRNHMLVGGIRPHFYCLPILKRNTHQVALLDAATSGNPKFFLGTDSAPHARHAKEAACGCAGCYTAYAAIEMYAEAFEQRNALDKLEGFASLHGPAFYGLPANTDTITLVREEWTAPDSLPFGEQTVIPLRAGEKLRWRLLEDNA.

Zn(2+) is bound by residues histidine 14 and histidine 16. Residues histidine 16 to arginine 18 and asparagine 42 contribute to the substrate site. Residues lysine 100, histidine 137, and histidine 175 each coordinate Zn(2+). Lysine 100 carries the N6-carboxylysine modification. Substrate is bound at residue histidine 137. Residue leucine 220 participates in substrate binding. Aspartate 248 is a binding site for Zn(2+). Residue aspartate 248 is part of the active site. Histidine 252 and alanine 264 together coordinate substrate.

This sequence belongs to the metallo-dependent hydrolases superfamily. DHOase family. Class II DHOase subfamily. As to quaternary structure, homodimer. Requires Zn(2+) as cofactor.

The enzyme catalyses (S)-dihydroorotate + H2O = N-carbamoyl-L-aspartate + H(+). It participates in pyrimidine metabolism; UMP biosynthesis via de novo pathway; (S)-dihydroorotate from bicarbonate: step 3/3. Functionally, catalyzes the reversible cyclization of carbamoyl aspartate to dihydroorotate. The chain is Dihydroorotase from Pseudomonas putida (strain W619).